The sequence spans 176 residues: Translation initiation factor IF-3 (176 aa).

It belongs to the IF-3 family. In terms of assembly, monomer.

The protein localises to the cytoplasm. Its function is as follows. IF-3 binds to the 30S ribosomal subunit and shifts the equilibrium between 70S ribosomes and their 50S and 30S subunits in favor of the free subunits, thus enhancing the availability of 30S subunits on which protein synthesis initiation begins. The sequence is that of Translation initiation factor IF-3 from Streptococcus thermophilus (strain ATCC BAA-491 / LMD-9).